Here is a 725-residue protein sequence, read N- to C-terminus: ATP-dependent rRNA helicase SPB4 (725 aa).

The Q motif signature appears at 15 to 43 (WAKLNPPLSPWILDVINSMGFKNMTPVQA). In terms of domain architecture, Helicase ATP-binding spans 46–260 (IPRAVKNQDC…GLGLRNPVRI (215 aa)). 59–66 (AVTGSGKT) contributes to the ATP binding site. The disordered stretch occupies residues 119–156 (ESEEETGDVEAHAPPFASSSRSPSPQTPDKPLFPLPML). Residues 132 to 142 (PPFASSSRSPS) are compositionally biased toward low complexity. Residues 143–152 (PQTPDKPLFP) are compositionally biased toward pro residues. Positions 207–210 (DEAD) match the DEAD box motif. The 164-residue stretch at 295–458 (KTLQLIRLLL…YINAYLEEVD (164 aa)) folds into the Helicase C-terminal domain. The disordered stretch occupies residues 591 to 725 (AQRADNQSSN…IGGGMFDDLE (135 aa)). Basic and acidic residues-rich tracts occupy residues 603–646 (ARAE…KYEW) and 685–707 (EIGKEYKSLKREIKEEKSVKESS). The span at 709-725 (GGAGGGGIGGGMFDDLE) shows a compositional bias: gly residues.

Belongs to the DEAD box helicase family. DDX55/SPB4 subfamily. As to quaternary structure, component of pre-60S ribosomal complexes.

It is found in the nucleus. The protein resides in the nucleolus. The enzyme catalyses ATP + H2O = ADP + phosphate + H(+). ATP-binding RNA helicase involved in the biogenesis of 60S ribosomal subunits. Binds 90S pre-ribosomal particles and dissociates from pre-60S ribosomal particles after processing of 27SB pre-rRNA. Required for the normal formation of 18S rRNA through the processing of pre-rRNAs at sites A0, A1 and A2, and the normal formation of 25S and 5.8S rRNAs through the processing of pre-rRNAs at sites C1 and C2. The chain is ATP-dependent rRNA helicase SPB4 from Cryptococcus neoformans var. neoformans serotype D (strain JEC21 / ATCC MYA-565) (Filobasidiella neoformans).